The sequence spans 509 residues: Lysine--tRNA ligase (509 aa).

The Mg(2+) site is built by Glu417 and Glu424.

Belongs to the class-II aminoacyl-tRNA synthetase family. In terms of assembly, homodimer. The cofactor is Mg(2+).

It localises to the cytoplasm. The catalysed reaction is tRNA(Lys) + L-lysine + ATP = L-lysyl-tRNA(Lys) + AMP + diphosphate. The chain is Lysine--tRNA ligase from Blochmanniella pennsylvanica (strain BPEN).